The sequence spans 970 residues: Serine/threonine-protein kinase PLK4 (970 aa).

Positions 12-265 (FKVGNLLGKG…LSSVLDHPFM (254 aa)) constitute a Protein kinase domain. ATP-binding positions include 18–26 (LGKGSFAGV) and lysine 41. 2 positions are modified to N6-acetyllysine: lysine 45 and lysine 46. Aspartate 136 (proton acceptor) is an active-site residue. Disordered regions lie at residues 323–458 (TVFP…NHLC) and 497–538 (SISP…HSVK). Residues 328–356 (NKSSTDFSSSGDGNSFYTQWGNQETSNSG) show a composition bias toward polar residues. The segment covering 360–369 (VIQDAEERPH) has biased composition (basic and acidic residues). Polar residues predominate over residues 379 to 393 (SDRSGTSNSQSQAKT). Residue serine 401 is modified to Phosphoserine. The segment covering 438-454 (SSSSGSFERPDNNQALS) has biased composition (polar residues). Residues 504–515 (FQGHPDLQKDTS) are compositionally biased toward basic and acidic residues. Residues 586–699 (TLRSITSPLV…SRFVQLVRSK (114 aa)) enclose the Cryptic POLO box 1 (CPB1) domain. Position 665 is a phosphoserine (serine 665). The Cryptic POLO box 2 (CPB2) domain occupies 700-813 (SPKITYFTRY…GRKPGSTSSP (114 aa)). A disordered region spans residues 808–828 (GSTSSPKALSPPPSVDSNYPT). The residue at position 817 (serine 817) is a Phosphoserine. The 79-residue stretch at 886-964 (QLLKSVFVKN…LSSILLMFSN (79 aa)) folds into the POLO box domain.

Belongs to the protein kinase superfamily. Ser/Thr protein kinase family. CDC5/Polo subfamily. As to quaternary structure, homodimer. Interacts with CEP152 (via N-terminus). Interacts with CEP78; this interaction may be important for proper PLK4 localization to the centriole and PLK4-induced overduplication of centrioles. Interacts with CEP131. Interacts simultaneously with TENT5C and CEP192. Interacts with TENT5C; this interaction leads to the TENT5C recruitment in the centrosome. Interacts with CEP85; this interaction may be important in cell migration and centriole assembly. Post-translationally, acetylation by KAT2A and KAT2B impairs kinase activity by shifting the kinase to an inactive conformation. In terms of processing, ubiquitinated; leading to its degradation by the proteasome. Deubiquitinated by USP54; leading to PLK4 stabilization. Tyrosine-phosphorylated by TEC.

It is found in the cytoplasm. The protein resides in the cytoskeleton. The protein localises to the microtubule organizing center. Its subcellular location is the centrosome. It localises to the centriole. It is found in the nucleus. The protein resides in the nucleolus. The protein localises to the cleavage furrow. The enzyme catalyses L-seryl-[protein] + ATP = O-phospho-L-seryl-[protein] + ADP + H(+). It carries out the reaction L-threonyl-[protein] + ATP = O-phospho-L-threonyl-[protein] + ADP + H(+). Serine/threonine-protein kinase that plays a central role in centriole duplication. Able to trigger procentriole formation on the surface of the parental centriole cylinder, leading to the recruitment of centriole biogenesis proteins such as SASS6, CPAP, CCP110, CEP135 and gamma-tubulin. When overexpressed, it is able to induce centrosome amplification through the simultaneous generation of multiple procentrioles adjoining each parental centriole during S phase. Phosphorylates 'Ser-151' of FBXW5 during the G1/S transition, leading to inhibit FBXW5 ability to ubiquitinate SASS6. Its central role in centriole replication suggests a possible role in tumorigenesis, centrosome aberrations being frequently observed in tumors. Also involved in deuterosome-mediated centriole amplification in multiciliated that can generate more than 100 centrioles. Also involved in trophoblast differentiation by phosphorylating HAND1, leading to disrupt the interaction between HAND1 and MDFIC and activate HAND1. Phosphorylates CDC25C and CHEK2. Required for the recruitment of STIL to the centriole and for STIL-mediated centriole amplification. Phosphorylates CEP131 at 'Ser-78' and PCM1 at 'Ser-372' which is essential for proper organization and integrity of centriolar satellites. The polypeptide is Serine/threonine-protein kinase PLK4 (Homo sapiens (Human)).